The primary structure comprises 740 residues: Elongation factor 2 (740 aa).

A tr-type G domain is found at 23–264; the sequence is AQIRNAGTLA…MIIEHVPPPN (242 aa). GTP-binding positions include 32 to 39, 98 to 102, and 152 to 155; these read AHVDHGKT, DTPGH, and NKID. Position 605 is a diphthamide (His605).

Belongs to the TRAFAC class translation factor GTPase superfamily. Classic translation factor GTPase family. EF-G/EF-2 subfamily.

The protein resides in the cytoplasm. Its function is as follows. Catalyzes the GTP-dependent ribosomal translocation step during translation elongation. During this step, the ribosome changes from the pre-translocational (PRE) to the post-translocational (POST) state as the newly formed A-site-bound peptidyl-tRNA and P-site-bound deacylated tRNA move to the P and E sites, respectively. Catalyzes the coordinated movement of the two tRNA molecules, the mRNA and conformational changes in the ribosome. This is Elongation factor 2 from Pyrobaculum arsenaticum (strain DSM 13514 / JCM 11321 / PZ6).